The sequence spans 263 residues: Non-homologous end joining protein Ku 3 (263 aa).

The 164-residue stretch at 6 to 169 folds into the Ku domain; sequence FGLVSVPVQL…WADEVRDPHR (164 aa).

This sequence belongs to the prokaryotic Ku family. As to quaternary structure, homodimer. Interacts with LigD.

Functionally, with LigD forms a non-homologous end joining (NHEJ) DNA repair enzyme, which repairs dsDNA breaks with reduced fidelity. Binds linear dsDNA with 5'- and 3'- overhangs but not closed circular dsDNA nor ssDNA. Recruits and stimulates the ligase activity of LigD. This Saccharopolyspora erythraea (strain ATCC 11635 / DSM 40517 / JCM 4748 / NBRC 13426 / NCIMB 8594 / NRRL 2338) protein is Non-homologous end joining protein Ku 3.